The sequence spans 677 residues: Methionine--tRNA ligase (677 aa).

Positions 15–25 (PYANGSIHLGH) match the 'HIGH' region motif. The Zn(2+) site is built by Cys-146, Cys-149, Cys-159, and Cys-162. The short motif at 333-337 (KMSKS) is the 'KMSKS' region element. An ATP-binding site is contributed by Lys-336. One can recognise a tRNA-binding domain in the interval 575–677 (DFAKIDLRVA…DGAKPGQQVK (103 aa)).

It belongs to the class-I aminoacyl-tRNA synthetase family. MetG type 1 subfamily. Homodimer. The cofactor is Zn(2+).

It is found in the cytoplasm. The catalysed reaction is tRNA(Met) + L-methionine + ATP = L-methionyl-tRNA(Met) + AMP + diphosphate. In terms of biological role, is required not only for elongation of protein synthesis but also for the initiation of all mRNA translation through initiator tRNA(fMet) aminoacylation. The sequence is that of Methionine--tRNA ligase from Salmonella typhimurium (strain LT2 / SGSC1412 / ATCC 700720).